The sequence spans 394 residues: Elongation factor Tu (394 aa).

Residues 10–204 (KPHVNVGTIG…ALDSYIPEPQ (195 aa)) enclose the tr-type G domain. Residues 19–26 (GHVDHGKT) are G1. 19 to 26 (GHVDHGKT) provides a ligand contact to GTP. Threonine 26 lines the Mg(2+) pocket. The segment at 60-64 (GITIN) is G2. Positions 81-84 (DCPG) are G3. Residues 81–85 (DCPGH) and 136–139 (NKCD) each bind GTP. The interval 136–139 (NKCD) is G4. The G5 stretch occupies residues 174–176 (SAL).

The protein belongs to the TRAFAC class translation factor GTPase superfamily. Classic translation factor GTPase family. EF-Tu/EF-1A subfamily. As to quaternary structure, monomer.

The protein resides in the cytoplasm. The enzyme catalyses GTP + H2O = GDP + phosphate + H(+). Its function is as follows. GTP hydrolase that promotes the GTP-dependent binding of aminoacyl-tRNA to the A-site of ribosomes during protein biosynthesis. The polypeptide is Elongation factor Tu (Shewanella baltica (strain OS185)).